The primary structure comprises 88 residues: LYR motif-containing protein 2 (88 aa).

Residues 1–19 (MAASRLPPAALTLKQFMRR) constitute a mitochondrion transit peptide.

Belongs to the complex I LYR family.

The protein resides in the mitochondrion. Its function is as follows. Involved in efficient integration of the N-module into mitochondrial respiratory chain complex I. The sequence is that of LYR motif-containing protein 2 (Lyrm2) from Mus musculus (Mouse).